Reading from the N-terminus, the 121-residue chain is UPF0091 protein PH1428 (121 aa).

It belongs to the UPF0091 family.

This is UPF0091 protein PH1428 from Pyrococcus horikoshii (strain ATCC 700860 / DSM 12428 / JCM 9974 / NBRC 100139 / OT-3).